The chain runs to 251 residues: MIGRTFKTDIADYETARPDYPPQITEWLNDEFSVNETSTILELGAGSGKLTPRIIASQPKEIIAVDTYVEMLDVLKKKFPNVDCRVGSAMAIPLEDESVDLVACGQCFHWFANEEALKEIYRVLKPNGKLALIWNIRDNSVPWVEKCSQLLEKCRGGPLNMFEKAAELFPGYGFTELKQSLFTSAKKYSIEDLHRLMNSFSSINRLPVEEKEKMHAELDEIIKTIPRAQNTDQVDFNILTVAYSSEKVPIN.

It belongs to the methyltransferase superfamily.

Its subcellular location is the cytoplasm. The protein localises to the nucleus. Functionally, probable methyltransferase. This is an uncharacterized protein from Schizosaccharomyces pombe (strain 972 / ATCC 24843) (Fission yeast).